We begin with the raw amino-acid sequence, 690 residues long: Polyribonucleotide nucleotidyltransferase (690 aa).

Residues Asp483 and Asp489 each coordinate Mg(2+). Residues 550–609 form the KH domain; the sequence is PKMEQITVDKKDIAAVIGKGGATIREIVEKSGAKLDVNDEGVVTVAAPDEESRNIAMQMI. Residues 619–686 enclose the S1 motif domain; sequence NKIYSGKVMK…DRGKVKLSMK (68 aa).

The protein belongs to the polyribonucleotide nucleotidyltransferase family. Requires Mg(2+) as cofactor.

The protein resides in the cytoplasm. It catalyses the reaction RNA(n+1) + phosphate = RNA(n) + a ribonucleoside 5'-diphosphate. Functionally, involved in mRNA degradation. Catalyzes the phosphorolysis of single-stranded polyribonucleotides processively in the 3'- to 5'-direction. The chain is Polyribonucleotide nucleotidyltransferase from Pelagibacter ubique (strain HTCC1062).